The chain runs to 273 residues: Shikimate dehydrogenase (NADP(+)) (273 aa).

Shikimate-binding positions include 15 to 17 and T62; that span reads SQS. Residue K66 is the Proton acceptor of the active site. E78 provides a ligand contact to NADP(+). Shikimate contacts are provided by N87 and D102. NADP(+) is bound by residues 127–131, 151–156, and M215; these read GAGGA and NRTVIK. Y217 contacts shikimate. Residue G239 coordinates NADP(+).

The protein belongs to the shikimate dehydrogenase family. Homodimer.

It carries out the reaction shikimate + NADP(+) = 3-dehydroshikimate + NADPH + H(+). The protein operates within metabolic intermediate biosynthesis; chorismate biosynthesis; chorismate from D-erythrose 4-phosphate and phosphoenolpyruvate: step 4/7. Its function is as follows. Involved in the biosynthesis of the chorismate, which leads to the biosynthesis of aromatic amino acids. Catalyzes the reversible NADPH linked reduction of 3-dehydroshikimate (DHSA) to yield shikimate (SA). The protein is Shikimate dehydrogenase (NADP(+)) of Chromobacterium violaceum (strain ATCC 12472 / DSM 30191 / JCM 1249 / CCUG 213 / NBRC 12614 / NCIMB 9131 / NCTC 9757 / MK).